The sequence spans 142 residues: 3-hydroxyacyl-[acyl-carrier-protein] dehydratase FabZ (142 aa).

His49 is an active-site residue.

This sequence belongs to the thioester dehydratase family. FabZ subfamily.

Its subcellular location is the cytoplasm. It catalyses the reaction a (3R)-hydroxyacyl-[ACP] = a (2E)-enoyl-[ACP] + H2O. Involved in unsaturated fatty acids biosynthesis. Catalyzes the dehydration of short chain beta-hydroxyacyl-ACPs and long chain saturated and unsaturated beta-hydroxyacyl-ACPs. The protein is 3-hydroxyacyl-[acyl-carrier-protein] dehydratase FabZ of Clostridium novyi (strain NT).